Consider the following 432-residue polypeptide: Phosphomevalonate kinase (432 aa).

ATP-binding positions include Lys-10 and 142 to 148 (VEKTGLG).

This sequence belongs to the GHMP kinase family. Mevalonate kinase subfamily.

The protein localises to the cytoplasm. It catalyses the reaction (R)-5-phosphomevalonate + ATP = (R)-5-diphosphomevalonate + ADP. Its pathway is isoprenoid biosynthesis; isopentenyl diphosphate biosynthesis via mevalonate pathway; isopentenyl diphosphate from (R)-mevalonate: step 2/3. Phosphomevalonate kinase; part of the second module of ergosterol biosynthesis pathway that includes the middle steps of the pathway. ERG8 converts 5-phosphomevalonate to 5-diphosphomevalonate. The second module is carried out in the vacuole and involves the formation of farnesyl diphosphate, which is also an important intermediate in the biosynthesis of ubiquinone, dolichol, heme and prenylated proteins. Activity by the mevalonate kinase ERG12 first converts mevalonate into 5-phosphomevalonate. 5-phosphomevalonate is then further converted to 5-diphosphomevalonate by the phosphomevalonate kinase ERG8. The diphosphomevalonate decarboxylase MVD then produces isopentenyl diphosphate. The isopentenyl-diphosphate delta-isomerase IDI1 then catalyzes the 1,3-allylic rearrangement of the homoallylic substrate isopentenyl (IPP) to its highly electrophilic allylic isomer, dimethylallyl diphosphate (DMAPP). Finally the farnesyl diphosphate synthase ERG20 catalyzes the sequential condensation of isopentenyl pyrophosphate with dimethylallyl pyrophosphate, and then with the resultant geranylpyrophosphate to the ultimate product farnesyl pyrophosphate. The sequence is that of Phosphomevalonate kinase from Candida albicans (strain SC5314 / ATCC MYA-2876) (Yeast).